The chain runs to 86 residues: uncharacterized protein (86 aa).

2 TPR repeats span residues 8–41 (AEYY…NPFY) and 42–75 (RDAW…EKHL).

This is an uncharacterized protein from Methanocaldococcus jannaschii (strain ATCC 43067 / DSM 2661 / JAL-1 / JCM 10045 / NBRC 100440) (Methanococcus jannaschii).